A 236-amino-acid polypeptide reads, in one-letter code: Growth-regulating factor 12 (236 aa).

Positions Met1–Thr27 are disordered. In terms of domain architecture, QLQ spans Ala74 to Lys109. Residues Glu140–Ala184 enclose the WRC domain. 2 short sequence motifs (bipartite nuclear localization signal) span residues Arg145–Arg155 and Arg173–Lys180.

Belongs to the GRF family.

The protein resides in the nucleus. In terms of biological role, transcription activator that plays a regulatory role in gibberellin-induced stem elongation. In Oryza sativa subsp. japonica (Rice), this protein is Growth-regulating factor 12 (GRF12).